The chain runs to 217 residues: Thiamine-phosphate synthase (217 aa).

4-amino-2-methyl-5-(diphosphooxymethyl)pyrimidine-binding positions include 39–43 (QYRDK) and Asn-71. 2 residues coordinate Mg(2+): Asp-72 and Asp-91. Thr-110 is a binding site for 4-amino-2-methyl-5-(diphosphooxymethyl)pyrimidine. 137–139 (SHT) contacts 2-[(2R,5Z)-2-carboxy-4-methylthiazol-5(2H)-ylidene]ethyl phosphate. Lys-140 provides a ligand contact to 4-amino-2-methyl-5-(diphosphooxymethyl)pyrimidine. Gly-167 serves as a coordination point for 2-[(2R,5Z)-2-carboxy-4-methylthiazol-5(2H)-ylidene]ethyl phosphate.

It belongs to the thiamine-phosphate synthase family. Mg(2+) serves as cofactor.

The catalysed reaction is 2-[(2R,5Z)-2-carboxy-4-methylthiazol-5(2H)-ylidene]ethyl phosphate + 4-amino-2-methyl-5-(diphosphooxymethyl)pyrimidine + 2 H(+) = thiamine phosphate + CO2 + diphosphate. It carries out the reaction 2-(2-carboxy-4-methylthiazol-5-yl)ethyl phosphate + 4-amino-2-methyl-5-(diphosphooxymethyl)pyrimidine + 2 H(+) = thiamine phosphate + CO2 + diphosphate. The enzyme catalyses 4-methyl-5-(2-phosphooxyethyl)-thiazole + 4-amino-2-methyl-5-(diphosphooxymethyl)pyrimidine + H(+) = thiamine phosphate + diphosphate. It participates in cofactor biosynthesis; thiamine diphosphate biosynthesis; thiamine phosphate from 4-amino-2-methyl-5-diphosphomethylpyrimidine and 4-methyl-5-(2-phosphoethyl)-thiazole: step 1/1. Its function is as follows. Condenses 4-methyl-5-(beta-hydroxyethyl)thiazole monophosphate (THZ-P) and 2-methyl-4-amino-5-hydroxymethyl pyrimidine pyrophosphate (HMP-PP) to form thiamine monophosphate (TMP). The protein is Thiamine-phosphate synthase of Alcanivorax borkumensis (strain ATCC 700651 / DSM 11573 / NCIMB 13689 / SK2).